A 333-amino-acid chain; its full sequence is Phosphoribosylformylglycinamidine cyclo-ligase (333 aa).

It belongs to the AIR synthase family.

The protein localises to the cytoplasm. The enzyme catalyses 2-formamido-N(1)-(5-O-phospho-beta-D-ribosyl)acetamidine + ATP = 5-amino-1-(5-phospho-beta-D-ribosyl)imidazole + ADP + phosphate + H(+). It functions in the pathway purine metabolism; IMP biosynthesis via de novo pathway; 5-amino-1-(5-phospho-D-ribosyl)imidazole from N(2)-formyl-N(1)-(5-phospho-D-ribosyl)glycinamide: step 2/2. This chain is Phosphoribosylformylglycinamidine cyclo-ligase, found in Clostridium perfringens (strain 13 / Type A).